The chain runs to 176 residues: ATP synthase subunit d, mitochondrial (176 aa).

As to quaternary structure, F-type ATP synthases have 2 components, the catalytic core F(1) and the membrane-embedded component F(0), linked together by a central stalk and a peripheral stalk. The central stalk, also called rotor shaft, is often seen as part of F(1). The peripheral stalk is seen as part of F(0). F(0) contains the membrane channel next to the rotor. F-type ATP synthases form dimers but each monomer functions independently in ATP generation. The dimer consists of 17 different polypeptides: ATP1 (subunit alpha, 3 molecules per monomer, part of F(1)), ATP2 (subunit beta, 3 copies per monomer, part of F(1)), ATP3 (subunit gamma, part of the central stalk), ATP4 (subunit b, part of the peripheral stalk), ATP5/OSCP (subunit 5/OSCP, part of the peripheral stalk), ATP6 (subunit a, part of the peripheral stalk), ATP7 (subunit d, part of the peripheral stalk), ATP8 (subunit 8, part of the peripheral stalk), OLI1 (subunit c, part of the rotor, 10 molecules per monomer), ATP14 (subunit h, part of the peripheral stalk), ATP15 (subunit epsilon, part of the central stalk), ATP16 (subunit delta, part of the central stalk), ATP17 (subunit f, part of the peripheral stalk), ATP18 (subunit i/j, part of the peripheral stalk), ATP19 (subunit k, dimer-specific, at interface between monomers), ATP20 (subunit g, at interface between monomers), TIM11 (subunit e, at interface between monomers).

It localises to the mitochondrion inner membrane. Functionally, mitochondrial membrane ATP synthase (F(1)F(0) ATP synthase or Complex V) produces ATP from ADP in the presence of a proton gradient across the membrane which is generated by electron transport complexes of the respiratory chain. F-type ATP synthases consist of two structural domains, F(1) - containing the extramembraneous catalytic core, and F(0) - containing the membrane proton channel, linked together by a central stalk and a peripheral stalk. During catalysis, ATP synthesis in the catalytic domain of F(1) is coupled via a rotary mechanism of the central stalk subunits to proton translocation. Part of the complex F(0) domain and the peripheral stalk, which acts as a stator to hold the catalytic alpha/ATP1(3)beta/ATP2(3) subcomplex and subunit a/ATP6 static relative to the rotary elements. This Yarrowia lipolytica (strain CLIB 122 / E 150) (Yeast) protein is ATP synthase subunit d, mitochondrial.